We begin with the raw amino-acid sequence, 670 residues long: Sodium/potassium/calcium exchanger 2 (670 aa).

Residues 1-38 are Cytoplasmic-facing; sequence MDLHQSATVRLLQEWCSHESPSGCRRHYNTRKKLKLIR. The chain crosses the membrane as a helical span at residues 39 to 59; the sequence is VIGLVMGLVAVSTVPFSISAF. Over 60 to 133 the chain is Extracellular; sequence TETYSQNNRG…DVFSLEERRK (74 aa). 2 disordered regions span residues 67–86 and 91–122; these read NRGE…HRQR and LNDK…GDYP. Residues 106–122 show a composition bias toward basic and acidic residues; the sequence is QEDRSENGTDHAQGDYP. Asn112 carries an N-linked (GlcNAc...) asparagine glycan. The helical transmembrane segment at 134-154 threads the bilayer; the sequence is GAIILHVIGMIYMFIALAIVC. Over 155–179 the chain is Cytoplasmic; that stretch reads DEFFVPSLTVITEKLGISDDVAGAT. The Alpha-1 repeat unit spans residues 175 to 215; the sequence is VAGATFMAAGGSAPELFTSLIGVFIAHSNVGIGTIVGSAVF. A helical transmembrane segment spans residues 180 to 200; sequence FMAAGGSAPELFTSLIGVFIA. At 201–205 the chain is on the extracellular side; that stretch reads HSNVG. Residues 206-226 form a helical membrane-spanning segment; it reads IGTIVGSAVFNILFVIGMCAL. At 227-244 the chain is on the cytoplasmic side; that stretch reads FSREILNLTWWPLFRDVS. A helical membrane pass occupies residues 245-265; it reads FYIVDLIMLIIFFLDNVIMWW. Position 266 (Glu266) is a topological domain, extracellular. A helical transmembrane segment spans residues 267 to 287; sequence SLLLLTAYFAYVVFMKFNVQV. Over 288–506 the chain is Cytoplasmic; sequence ERWVKQMINR…PDVRKPASKK (219 aa). Positions 312 to 335 are disordered; that stretch reads ASTAGDKEEPTLPNKPRLQRGGSS. Residues Ser337 and Ser341 each carry the phosphoserine modification. Disordered stretches follow at residues 394 to 414 and 450 to 471; these read KCQV…DYAA and AADA…LSLS. Residues 507-527 form a helical membrane-spanning segment; that stretch reads FFPITFFGSITWIAVFSYLMV. The Extracellular portion of the chain corresponds to 528-542; sequence WWAHQVGETIGISEE. A helical membrane pass occupies residues 543–563; that stretch reads IMGLTILAAGTSIPDLITSVI. An Alpha-2 repeat occupies 550-581; it reads AAGTSIPDLITSVIVARKGLGDMAVSSSVGSN. At 564-578 the chain is on the cytoplasmic side; the sequence is VARKGLGDMAVSSSV. A helical transmembrane segment spans residues 579–599; the sequence is GSNIFDITVGLPLPWLLYTII. Topologically, residues 600 to 611 are extracellular; the sequence is HRFKPVTVSSNG. The chain crosses the membrane as a helical span at residues 612 to 632; the sequence is LFCAIVLLFIMLIFVILSIAL. Residues 633-639 lie on the Cytoplasmic side of the membrane; it reads CKWRMNK. A helical transmembrane segment spans residues 640 to 660; the sequence is ILGFIMFGLYFAFLVVSVLLE. At 661–670 the chain is on the extracellular side; the sequence is DKVLECPVSI.

This sequence belongs to the Ca(2+):cation antiporter (CaCA) (TC 2.A.19) family. SLC24A subfamily. In terms of tissue distribution, expressed abundantly in all regions of the brain and weakly in the eye, large intestine and adrenal tissue.

It is found in the cell membrane. It carries out the reaction Ca(2+)(out) + K(+)(out) + 4 Na(+)(in) = Ca(2+)(in) + K(+)(in) + 4 Na(+)(out). Calcium, potassium:sodium antiporter that transports 1 Ca(2+) and 1 K(+) in exchange for 4 Na(+). Required for learming and memory by regulating neuronal Ca(2+), which is essential for the development of synaptic plasticity. This Rattus norvegicus (Rat) protein is Sodium/potassium/calcium exchanger 2 (Slc24a2).